Here is a 391-residue protein sequence, read N- to C-terminus: Glutamate 5-kinase (391 aa).

Residue lysine 17 participates in ATP binding. Substrate is bound by residues serine 57, aspartate 144, and asparagine 156. ATP contacts are provided by residues serine 176–aspartate 177 and threonine 216–lysine 222. In terms of domain architecture, PUA spans glutamine 278–alanine 356. Residues serine 370 to serine 391 are disordered. The span at serine 378–serine 391 shows a compositional bias: polar residues.

The protein belongs to the glutamate 5-kinase family.

It is found in the cytoplasm. The catalysed reaction is L-glutamate + ATP = L-glutamyl 5-phosphate + ADP. It functions in the pathway amino-acid biosynthesis; L-proline biosynthesis; L-glutamate 5-semialdehyde from L-glutamate: step 1/2. Functionally, catalyzes the transfer of a phosphate group to glutamate to form L-glutamate 5-phosphate. This is Glutamate 5-kinase from Cutibacterium acnes (strain DSM 16379 / KPA171202) (Propionibacterium acnes).